Reading from the N-terminus, the 462-residue chain is Flavin-containing monooxygenase FMO GS-OX3 (462 aa).

Residue 17–22 (GAGPAG) participates in FAD binding. An NADP(+)-binding site is contributed by 212–217 (GNFASG). A helical membrane pass occupies residues 318-338 (ALAPGLAFVGLPAMGIVFVMF).

The protein belongs to the FMO family.

Its subcellular location is the membrane. It catalyses the reaction a (Z)-omega-(methylsulfanyl)-N-sulfo-alkylhydroximate S-glucoside + NADPH + O2 + H(+) = a (Z)-omega-(methylsulfinyl)-alkyl-glucosinolate + NADP(+) + H2O. Functionally, catalyzes the conversion of methylthioalkyl glucosinolates of any chain length into methylsulfinylalkyl glucosinolates. Prefers probably short-chain methylthioalkyl glucosinolates in cv. Landsberg erecta. The protein is Flavin-containing monooxygenase FMO GS-OX3 (FMOGS-OX3) of Arabidopsis thaliana (Mouse-ear cress).